The primary structure comprises 340 residues: Thioesterase pkgB (340 aa).

Zn(2+) contacts are provided by His-97, His-99, Asp-101, His-102, and His-205. Asp-101 serves as the catalytic Proton donor/acceptor. Positions Ser-242–Ser-258 are enriched in low complexity. The interval Ser-242–Ser-271 is disordered.

Belongs to the metallo-beta-lactamase superfamily. Zn(2+) serves as cofactor.

The catalysed reaction is 3,5,7,9,11,13-hexaoxotetradecanoyl-[ACP] = dehydrocitreoisocoumarin + holo-[ACP] + H2O. It carries out the reaction 3,5,7,9,11-pentaoxododecanoyl-[ACP] = 6,8-dihydroxy-3-(2-oxopropyl)-isocoumarin + holo-[ACP] + H2O. Functionally, thioesterase; part of the pkg gene cluster that mediates the biosynthesis of dihydrocitreoisocoumarin and 6,8-dihydroxy-3-(2-oxopropyl)-isocoumarin. The non-reducing polyketide synthase pkgA performs the condensation of one acetyl-CoA starter unit with 6 and 5 malonyl-CoA units, respectively. As pkgA lacks a releasing domain, the thioesterase pkgB is necessary to break the thioester bond and release dihydrocitreoisocoumarin and 6,8-dihydroxy-3-(2-oxopropyl)-isocoumarin from pkgA. The chain is Thioesterase pkgB from Emericella nidulans (strain FGSC A4 / ATCC 38163 / CBS 112.46 / NRRL 194 / M139) (Aspergillus nidulans).